We begin with the raw amino-acid sequence, 369 residues long: Biglycan (369 aa).

An N-terminal signal peptide occupies residues 1 to 16 (MCPLWLLTLLLALSQA). Positions 17–37 (LPFEQKGFWDFTLDDGLLMMN) are excised as a propeptide. Residues Ser-42 and Ser-48 are each glycosylated (O-linked (Xyl...) (glycosaminoglycan) serine). 2 disulfides stabilise this stretch: Cys-64/Cys-70 and Cys-68/Cys-77. LRR repeat units follow at residues 83–103 (KTVP…NNDI), 104–127 (SELR…NNKI), 128–151 (SKIH…KNHL), 152–172 (VEIP…DNRI), 173–196 (RKVP…GNPL), 197–221 (ENSG…EAKL), 222–242 (TGIP…HNKI), 243–266 (QAIE…HNQI), 267–290 (RMIE…NNKL), 291–313 (SRVP…SNNI), 314–343 (TKVG…NNPV), and 344–369 (PYWE…NYKK). N-linked (GlcNAc...) asparagine glycans are attached at residues Asn-271 and Asn-312. Residues Cys-322 and Cys-355 are joined by a disulfide bond.

The protein belongs to the small leucine-rich proteoglycan (SLRP) family. SLRP class I subfamily. In terms of processing, the two attached glycosaminoglycan chains can be either chondroitin sulfate or dermatan sulfate. As to expression, found in several connective tissues, especially in articular cartilages.

It is found in the secreted. It localises to the extracellular space. Its subcellular location is the extracellular matrix. Its function is as follows. May be involved in collagen fiber assembly. The protein is Biglycan (Bgn) of Mus musculus (Mouse).